A 220-amino-acid polypeptide reads, in one-letter code: Putative phosphatase YhcW (220 aa).

Asp-8 (nucleophile) is an active-site residue. The a divalent metal cation site is built by Asp-8, Asp-10, and Asp-166. The active-site Proton donor is Asp-10.

This sequence belongs to the HAD-like hydrolase superfamily. CbbY/CbbZ/Gph/YieH family. The cofactor is a divalent metal cation.

The sequence is that of Putative phosphatase YhcW (yhcW) from Bacillus subtilis (strain 168).